The chain runs to 301 residues: Ras-related GTP-binding protein A (301 aa).

GTP is bound by residues 9–16 (GRSESGKT), 57–61 (DCGGQ), and 122–125 (HKMD).

The protein belongs to the GTR/RAG GTP-binding protein family.

Its subcellular location is the cytoplasm. The protein localises to the nucleus. It is found in the lysosome. Guanine nucleotide-binding protein that plays a crucial role in the cellular response to amino acid availability through regulation of the TOR signaling cascade. The polypeptide is Ras-related GTP-binding protein A (ragA) (Dictyostelium discoideum (Social amoeba)).